Here is a 490-residue protein sequence, read N- to C-terminus: Myocilin (490 aa).

Positions Met-1–Ala-18 are cleaved as a signal peptide. The N-linked (GlcNAc...) asparagine glycan is linked to Asn-43. Positions Gln-52 to Gly-169 form a coiled coil. Basic and acidic residues predominate over residues Arg-146 to Asp-157. A disordered region spans residues Arg-146–Val-188. An Olfactomedin-like domain is found at Gly-230–Glu-489. Cysteines 231 and 419 form a disulfide. Ca(2+)-binding residues include Asp-366, Asn-414, Ala-415, Val-463, and Asp-464. The Microbody targeting signal motif lies at Ser-488–Met-490.

In terms of assembly, homodimer (via N-terminus). Can also form higher oligomers. Interacts with OLFM3, FN1, NRCAM, GLDN and NFASC. Interacts (via N-terminus) with MYL2. Interacts with SFRP1, FRZB, FZD7, FZD10, FZD1 and WIF1; regulates Wnt signaling. Interacts with SNTA1; regulates muscle hypertrophy. Interacts with ERBB2 and ERBB3; activates ERBB2-ERBB3 signaling pathway. Interacts with SNCG; affects its secretion and its aggregation. Post-translationally, palmitoylated. Undergoes a calcium-dependent proteolytic cleavage at Arg-212 by CAPN2 in the endoplasmic reticulum. The result is the production of two fragments, one of 35 kDa containing the C-terminal olfactomedin-like domain, and another of 20 kDa containing the N-terminal leucine zipper-like domain. In terms of processing, glycosylated. Expressed in optic nerve head, ciliary body and retina.

The protein resides in the secreted. It is found in the golgi apparatus. It localises to the cytoplasmic vesicle. Its subcellular location is the extracellular space. The protein localises to the extracellular matrix. The protein resides in the extracellular exosome. It is found in the mitochondrion. It localises to the mitochondrion intermembrane space. Its subcellular location is the mitochondrion inner membrane. The protein localises to the mitochondrion outer membrane. The protein resides in the rough endoplasmic reticulum. It is found in the cell projection. It localises to the cilium. Its subcellular location is the endoplasmic reticulum. Its function is as follows. Secreted glycoprotein regulating the activation of different signaling pathways in adjacent cells to control different processes including cell adhesion, cell-matrix adhesion, cytoskeleton organization and cell migration. Promotes substrate adhesion, spreading and formation of focal contacts. Negatively regulates cell-matrix adhesion and stress fiber assembly through Rho protein signal transduction. Modulates the organization of actin cytoskeleton by stimulating the formation of stress fibers through interactions with components of Wnt signaling pathways. Promotes cell migration through activation of PTK2 and the downstream phosphatidylinositol 3-kinase signaling. Plays a role in bone formation and promotes osteoblast differentiation in a dose-dependent manner through mitogen-activated protein kinase signaling. Mediates myelination in the peripheral nervous system through ERBB2/ERBB3 signaling. Plays a role as a regulator of muscle hypertrophy through the components of dystrophin-associated protein complex. Involved in positive regulation of mitochondrial depolarization. Plays a role in neurite outgrowth. May participate in the obstruction of fluid outflow in the trabecular meshwork. The sequence is that of Myocilin (MYOC) from Felis catus (Cat).